The following is a 269-amino-acid chain: Cytochrome c oxidase subunit 3 (269 aa).

The next 7 membrane-spanning stretches (helical) occupy residues 19-39 (PWPF…TLYL), 44-64 (HSSV…YLWF), 87-107 (IGFM…FWAF), 135-155 (LEVP…LTYA), 170-190 (GLYM…YEYW), 205-225 (FYFA…LLLA), and 247-267 (IYYW…IYIW).

It belongs to the cytochrome c oxidase subunit 3 family. As to quaternary structure, component of the cytochrome c oxidase (complex IV, CIV), a multisubunit enzyme composed of a catalytic core of 3 subunits and several supernumerary subunits. The complex exists as a monomer or a dimer and forms supercomplexes (SCs) in the inner mitochondrial membrane with ubiquinol-cytochrome c oxidoreductase (cytochrome b-c1 complex, complex III, CIII).

It is found in the mitochondrion inner membrane. It catalyses the reaction 4 Fe(II)-[cytochrome c] + O2 + 8 H(+)(in) = 4 Fe(III)-[cytochrome c] + 2 H2O + 4 H(+)(out). Its function is as follows. Component of the cytochrome c oxidase, the last enzyme in the mitochondrial electron transport chain which drives oxidative phosphorylation. The respiratory chain contains 3 multisubunit complexes succinate dehydrogenase (complex II, CII), ubiquinol-cytochrome c oxidoreductase (cytochrome b-c1 complex, complex III, CIII) and cytochrome c oxidase (complex IV, CIV), that cooperate to transfer electrons derived from NADH and succinate to molecular oxygen, creating an electrochemical gradient over the inner membrane that drives transmembrane transport and the ATP synthase. Cytochrome c oxidase is the component of the respiratory chain that catalyzes the reduction of oxygen to water. Electrons originating from reduced cytochrome c in the intermembrane space (IMS) are transferred via the dinuclear copper A center (CU(A)) of subunit 2 and heme A of subunit 1 to the active site in subunit 1, a binuclear center (BNC) formed by heme A3 and copper B (CU(B)). The BNC reduces molecular oxygen to 2 water molecules using 4 electrons from cytochrome c in the IMS and 4 protons from the mitochondrial matrix. The protein is Cytochrome c oxidase subunit 3 (cox3) of Schizosaccharomyces pombe (strain 972 / ATCC 24843) (Fission yeast).